The primary structure comprises 498 residues: Aminotransferase swnA (498 aa).

This sequence belongs to the class-I pyridoxal-phosphate-dependent aminotransferase family. Pyridoxal 5'-phosphate serves as cofactor.

It functions in the pathway mycotoxin biosynthesis. Its function is as follows. Aminotransferase; part of the gene cluster that mediates the biosynthesis of swainsonine (SW), a cytotoxic fungal alkaloid and a potential cancer therapy drug. Swainsonine production occurs via a multibranched pathway and is dispensable for fungal colonization of plants and infection of insect hosts. The first step of swainsonine biosynthesis is the production of the precursor pipecolic acid (PA) via conversion of L-lysine (Lys) to 1-piperideine-6-carboxylate (P6C) by the aminotransferase swnA, the latter being further reduced to PA by the reductase swnR. PA can be converted from lysine by both the SW biosynthetic cluster and the unclustered genes such as lysine cyclodeaminase. The PKS-NRPS hybrid synthetase swnK uptakes and condensates PA and malonyl-CoA with and without skipping of the ketoreductase (KR) domain in order to produce 3 intermediates, 1-oxoindolizidine, (1S)-1-hydroxyindolizin, and (1R)-1-hydroxyindolizine; with the transisomer (1S)-1-hydroxyindolizin being predominant. The terminal thioester reductase (TE) domain of swnK is involved in reduction of the thioester bond to release the intermediate aldehydes. The oxidoreductase swnN could contribute to the reduction of 1-oxoindolizidine to (1S)-1-hydroxyindolizin and (1R)-1-hydroxyindolizine, contributing to the major route of SW production. The dioxygenase swnH2 would be responsible for the oxidization of (1R)-1-hydroxyindolizine into (1R,2S)-1,2-dihydroxyindolizine and of (1S)-1-hydroxyindolizin to yield both (1R,2S)-1,2-dihydroxyindolizine and (1S,2S)-1,2-dihydroxyindolizine. The dioxygenase swnH1 then performs the conversion of the 1,2-dihydroxyindolizine epimers to SW. This chain is Aminotransferase swnA, found in Metarhizium robertsii (strain ARSEF 23 / ATCC MYA-3075) (Metarhizium anisopliae (strain ARSEF 23)).